The chain runs to 732 residues: Eukaryotic translation initiation factor 3 subunit B (732 aa).

A sufficient for interaction with HCR1 and TIF32 region spans residues 1–94 (MTTLESLKIE…LFIEMESVSA (94 aa)). A sufficient for interaction with PIC8 region spans residues 1–219 (MTTLESLKIE…GVTSWGGPNF (219 aa)). Positions 37-120 (NFLVVDGAPV…HRLLVNSLND (84 aa)) constitute an RRM domain. WD repeat units lie at residues 185 to 224 (ARKN…RLKR), 237 to 280 (PTEK…LMKT), 439 to 481 (EMKD…KFFA), and 507 to 554 (VDQQ…KTLN).

This sequence belongs to the eIF-3 subunit B family. Component of the eukaryotic translation initiation factor 3 (eIF-3) complex.

It localises to the cytoplasm. Its function is as follows. RNA-binding component of the eukaryotic translation initiation factor 3 (eIF-3) complex, which is involved in protein synthesis of a specialized repertoire of mRNAs and, together with other initiation factors, stimulates binding of mRNA and methionyl-tRNAi to the 40S ribosome. The eIF-3 complex specifically targets and initiates translation of a subset of mRNAs involved in cell proliferation. The protein is Eukaryotic translation initiation factor 3 subunit B of Kluyveromyces lactis (strain ATCC 8585 / CBS 2359 / DSM 70799 / NBRC 1267 / NRRL Y-1140 / WM37) (Yeast).